The sequence spans 129 residues: Endocuticle structural glycoprotein SgAbd-9 (129 aa).

A Pyrrolidone carboxylic acid modification is found at Q1. The region spanning D28–S98 is the Chitin-binding type R&amp;R domain. An O-linked (HexNAc...) threonine glycan is attached at T120.

In terms of biological role, component of the abdominal endocuticle. The polypeptide is Endocuticle structural glycoprotein SgAbd-9 (Schistocerca gregaria (Desert locust)).